A 156-amino-acid polypeptide reads, in one-letter code: Probable cyclic pyranopterin monophosphate synthase (156 aa).

Substrate is bound by residues 74–76 (LCH) and 110–111 (ME). The active site involves aspartate 125.

This sequence belongs to the MoaC family. In terms of assembly, homohexamer; trimer of dimers.

The catalysed reaction is (8S)-3',8-cyclo-7,8-dihydroguanosine 5'-triphosphate = cyclic pyranopterin phosphate + diphosphate. It participates in cofactor biosynthesis; molybdopterin biosynthesis. In terms of biological role, catalyzes the conversion of (8S)-3',8-cyclo-7,8-dihydroguanosine 5'-triphosphate to cyclic pyranopterin monophosphate (cPMP). The polypeptide is Probable cyclic pyranopterin monophosphate synthase (Thermococcus onnurineus (strain NA1)).